The primary structure comprises 120 residues: Adenosylhomocysteinase (120 aa).

Residue N34 coordinates NAD(+).

This sequence belongs to the adenosylhomocysteinase family. NAD(+) serves as cofactor.

Its subcellular location is the cytoplasm. The catalysed reaction is S-adenosyl-L-homocysteine + H2O = L-homocysteine + adenosine. The protein operates within amino-acid biosynthesis; L-homocysteine biosynthesis; L-homocysteine from S-adenosyl-L-homocysteine: step 1/1. May play a key role in the regulation of the intracellular concentration of adenosylhomocysteine. This is Adenosylhomocysteinase (ahcY) from Streptomyces fradiae (Streptomyces roseoflavus).